An 895-amino-acid chain; its full sequence is Serine-rich coiled-coil domain-containing protein 1 (895 aa).

Disordered regions lie at residues 1 to 142 (MGDS…KEPS), 154 to 177 (SGRS…KQST), 332 to 394 (ELHS…RTLG), and 459 to 497 (RSSS…SSKM). Residues 43–56 (SSSPSSTNSSSGST) are compositionally biased toward low complexity. The segment covering 83–102 (TEQNLSISNGAQPSHSNMQK) has biased composition (polar residues). A compositionally biased stretch (basic and acidic residues) spans 131 to 142 (LTEDFEREKEPS). Residues 348–358 (SLQSTELSVGN) are compositionally biased toward polar residues. Positions 675-705 (MLRLQLKDRDELISQLQAELEKVQHLQKAFA) form a coiled coil. Residues 731 to 753 (QGGRETTHRNRTMSQSHSTRDRK) are disordered.

Belongs to the CCSER family.

This Mus musculus (Mouse) protein is Serine-rich coiled-coil domain-containing protein 1 (Ccser1).